Consider the following 69-residue polypeptide: Cytochrome c oxidase subunit 8A, mitochondrial (69 aa).

Residues 1-25 (MSVLTSLLLRGLTGSARWLPVPRAK) constitute a mitochondrion transit peptide. Residues 2 to 19 (SVLTSLLLRGLTGSARWL) carry the SIFI-degron motif. Over 26 to 36 (VHSMPPEVELG) the chain is Mitochondrial matrix. A helical transmembrane segment spans residues 37–60 (IMEKAIGLTSCFVSLFLPAGWILS). The Mitochondrial intermembrane segment spans residues 61–69 (HLEDYKRPE).

This sequence belongs to the cytochrome c oxidase VIII family. In terms of assembly, component of the cytochrome c oxidase (complex IV, CIV), a multisubunit enzyme composed of 14 subunits. The complex is composed of a catalytic core of 3 subunits MT-CO1, MT-CO2 and MT-CO3, encoded in the mitochondrial DNA, and 11 supernumerary subunits COX4I, COX5A, COX5B, COX6A, COX6B, COX6C, COX7A, COX7B, COX7C, COX8 and NDUFA4, which are encoded in the nuclear genome. The complex exists as a monomer or a dimer and forms supercomplexes (SCs) in the inner mitochondrial membrane with NADH-ubiquinone oxidoreductase (complex I, CI) and ubiquinol-cytochrome c oxidoreductase (cytochrome b-c1 complex, complex III, CIII), resulting in different assemblies (supercomplex SCI(1)III(2)IV(1) and megacomplex MCI(2)III(2)IV(2)). Post-translationally, in response to mitochondrial stress, the precursor protein is ubiquitinated by the SIFI complex in the cytoplasm before mitochondrial import, leading to its degradation. Within the SIFI complex, UBR4 initiates ubiquitin chain that are further elongated or branched by KCMF1.

It localises to the mitochondrion inner membrane. It participates in energy metabolism; oxidative phosphorylation. In terms of biological role, component of the cytochrome c oxidase, the last enzyme in the mitochondrial electron transport chain which drives oxidative phosphorylation. The respiratory chain contains 3 multisubunit complexes succinate dehydrogenase (complex II, CII), ubiquinol-cytochrome c oxidoreductase (cytochrome b-c1 complex, complex III, CIII) and cytochrome c oxidase (complex IV, CIV), that cooperate to transfer electrons derived from NADH and succinate to molecular oxygen, creating an electrochemical gradient over the inner membrane that drives transmembrane transport and the ATP synthase. Cytochrome c oxidase is the component of the respiratory chain that catalyzes the reduction of oxygen to water. Electrons originating from reduced cytochrome c in the intermembrane space (IMS) are transferred via the dinuclear copper A center (CU(A)) of subunit 2 and heme A of subunit 1 to the active site in subunit 1, a binuclear center (BNC) formed by heme A3 and copper B (CU(B)). The BNC reduces molecular oxygen to 2 water molecules using 4 electrons from cytochrome c in the IMS and 4 protons from the mitochondrial matrix. The chain is Cytochrome c oxidase subunit 8A, mitochondrial (COX8A) from Macaca silenus (Lion-tailed macaque).